A 277-amino-acid chain; its full sequence is Elongation factor Ts (277 aa).

Residues 79–82 form an involved in Mg(2+) ion dislocation from EF-Tu region; sequence TDFV.

Belongs to the EF-Ts family.

The protein localises to the cytoplasm. Associates with the EF-Tu.GDP complex and induces the exchange of GDP to GTP. It remains bound to the aminoacyl-tRNA.EF-Tu.GTP complex up to the GTP hydrolysis stage on the ribosome. The sequence is that of Elongation factor Ts from Phytoplasma australiense.